The following is a 317-amino-acid chain: Tyrosine--tRNA ligase (317 aa).

An L-tyrosine-binding site is contributed by Tyr33. The 'HIGH' region motif lies at Pro38 to His46. The L-tyrosine site is built by Tyr155, Gln159, Asp162, and Gln177. The short motif at Lys211–Ser215 is the 'KMSKS' region element. Ser214 lines the ATP pocket.

The protein belongs to the class-I aminoacyl-tRNA synthetase family. TyrS type 3 subfamily. In terms of assembly, homodimer.

The protein resides in the cytoplasm. The catalysed reaction is tRNA(Tyr) + L-tyrosine + ATP = L-tyrosyl-tRNA(Tyr) + AMP + diphosphate + H(+). Catalyzes the attachment of tyrosine to tRNA(Tyr) in a two-step reaction: tyrosine is first activated by ATP to form Tyr-AMP and then transferred to the acceptor end of tRNA(Tyr). The sequence is that of Tyrosine--tRNA ligase from Methanosarcina barkeri (strain Fusaro / DSM 804).